The following is a 370-amino-acid chain: 4-hydroxy-3-methylbut-2-en-1-yl diphosphate synthase (flavodoxin) (370 aa).

[4Fe-4S] cluster-binding residues include Cys-268, Cys-271, Cys-303, and Glu-310.

Belongs to the IspG family. It depends on [4Fe-4S] cluster as a cofactor.

The catalysed reaction is (2E)-4-hydroxy-3-methylbut-2-enyl diphosphate + oxidized [flavodoxin] + H2O + 2 H(+) = 2-C-methyl-D-erythritol 2,4-cyclic diphosphate + reduced [flavodoxin]. It participates in isoprenoid biosynthesis; isopentenyl diphosphate biosynthesis via DXP pathway; isopentenyl diphosphate from 1-deoxy-D-xylulose 5-phosphate: step 5/6. Its function is as follows. Converts 2C-methyl-D-erythritol 2,4-cyclodiphosphate (ME-2,4cPP) into 1-hydroxy-2-methyl-2-(E)-butenyl 4-diphosphate. In Bacillus pumilus (strain SAFR-032), this protein is 4-hydroxy-3-methylbut-2-en-1-yl diphosphate synthase (flavodoxin).